Here is a 578-residue protein sequence, read N- to C-terminus: Longifolene synthase (578 aa).

3 residues coordinate Mg(2+): D331, D335, and D475. A DDXXD motif motif is present at residues 331 to 335 (DDLYD).

This sequence belongs to the terpene synthase family. Tpsd subfamily. The cofactor is Mg(2+). Mn(2+) is required as a cofactor.

The catalysed reaction is (2E,6E)-farnesyl diphosphate = longifolene + diphosphate. The protein operates within sesquiterpene biosynthesis. Its pathway is terpene metabolism; oleoresin biosynthesis. In terms of biological role, terpene synthase (TPS) involved in the biosynthesis of sesquiterpene natural products included in conifer oleoresin secretions and volatile emissions; these compounds contribute to biotic and abiotic stress defense against herbivores and pathogens. Catalyzes the conversion of (2E,6E)-farnesyl diphosphate (FPP) to longifolene. The polypeptide is Longifolene synthase (Picea engelmannii x Picea glauca (Hybrid white spruce)).